A 421-amino-acid polypeptide reads, in one-letter code: Proton extrusion protein PxcA (421 aa).

The segment at P124–D153 is disordered. The segment covering T125–K144 has biased composition (polar residues). Helical transmembrane passes span F203–V223, A298–S318, I345–I365, and F381–I401.

Belongs to the CemA family.

The protein localises to the cell inner membrane. In terms of biological role, required for H(+) efflux immediately after light irradiation to form a rapid H(+) concentration gradient across the thylakoid membranes. Together with PxcL, contributes to transient H(+) uptake following dark to light transition. The chain is Proton extrusion protein PxcA from Synechococcus sp. (strain ATCC 27144 / PCC 6301 / SAUG 1402/1) (Anacystis nidulans).